Here is a 264-residue protein sequence, read N- to C-terminus: Phosphonoacetaldehyde hydrolase (264 aa).

Aspartate 9 acts as the Nucleophile in catalysis. Residues aspartate 9 and alanine 11 each contribute to the Mg(2+) site. Lysine 50 (schiff-base intermediate with substrate) is an active-site residue. Aspartate 183 is a binding site for Mg(2+).

Belongs to the HAD-like hydrolase superfamily. PhnX family. As to quaternary structure, homodimer. The cofactor is Mg(2+).

The enzyme catalyses phosphonoacetaldehyde + H2O = acetaldehyde + phosphate + H(+). Functionally, involved in phosphonate degradation. The protein is Phosphonoacetaldehyde hydrolase of Bacillus thuringiensis (strain Al Hakam).